The primary structure comprises 107 residues: U1-lycotoxin-Ls1v (107 aa).

The first 20 residues, 1-20 (MMKVLVVVALLVTLISYSSS), serve as a signal peptide directing secretion. A propeptide spanning residues 21-41 (EGIDDLEADELLSLTANEQTR) is cleaved from the precursor. Intrachain disulfides connect cysteine 44-cysteine 59, cysteine 51-cysteine 68, cysteine 58-cysteine 86, and cysteine 70-cysteine 84.

Belongs to the neurotoxin 19 (CSTX) family. 04 (U1-Lctx) subfamily. As to expression, expressed by the venom gland.

Its subcellular location is the secreted. The chain is U1-lycotoxin-Ls1v from Lycosa singoriensis (Wolf spider).